We begin with the raw amino-acid sequence, 600 residues long: MSRQSISLRFPLLLLLLSPSPVFSADPGAPAPVNPCCYYPCQHQGICVRFGLDRYQCDCTRTGYSGPNCTIPEIWTWLRTTLRPSPSFIHFLLTHGRWLWDFVNATFIRDTLMRLVLTVRSNLIPSPPTYNIAHDYISWESFSNVSYYTRILPSVPRDCPTPMDTKGKKQLPDAEFLSRRFLLRRKFIPDPQSTNLMFAFFAQHFTHQFFKTSGKMGPGFTKALGHGVDLGHIYGDNLERQYQLRLFKDGKLKYQMLNGEVYPPSVEEAPVLMHYPRGIPPQSQMAVGQEVFGLLPGLMLYATIWLREHNRVCDLLKAEHPTWGDEQLFQTARLILIGETIKIVIEEYVQQLSGYFLQLKFDPELLFGAQFQYRNRIAMEFNQLYHWHPLMPDSFRVGPQDYSYEQFLFNTSMLVDYGVEALVDAFSRQPAGRIGGGRNIDHHILHVAVDVIKESRVLRLQPFNEYRKRFGMKPYTSFQELTGEKEMAAELEELYGDIDALEFYPGLLLEKCHPNSIFGESMIEMGAPFSLKGLLGNPICSPEYWKASTFGGEVGFNLVKTATLKKLVCLNTKTCPYVSFHVPDPRQEDRPGVERPPTEL.

Residues 1-24 form the signal peptide; that stretch reads MSRQSISLRFPLLLLLLSPSPVFS. Residues 32–70 enclose the EGF-like domain; it reads PVNPCCYYPCQHQGICVRFGLDRYQCDCTRTGYSGPNCT. 4 disulfide bridges follow: C36–C47, C37–C159, C41–C57, and C59–C69. The N-linked (GlcNAc...) asparagine glycan is linked to N68. 4 consecutive transmembrane segments (helical) span residues 74–82, 86–92, 97–105, and 108–122; these read IWTWLRTTL, PSFIHFL, RWLWDFVNA, and IRDT…VRSN. N-linked (GlcNAc...) asparagine glycosylation occurs at N144. Catalysis depends on H207, which acts as the Proton acceptor. Y385 functions as the For cyclooxygenase activity in the catalytic mechanism. H388 is a heme b binding site. N-linked (GlcNAc...) asparagine glycosylation is present at N410. C569 and C575 are disulfide-bonded.

It belongs to the prostaglandin G/H synthase family. As to quaternary structure, homodimer. It depends on heme b as a cofactor.

The protein localises to the endoplasmic reticulum membrane. The protein resides in the microsome membrane. It catalyses the reaction (5Z,8Z,11Z,14Z)-eicosatetraenoate + AH2 + 2 O2 = prostaglandin H2 + A + H2O. The enzyme catalyses (5Z,8Z,11Z,14Z)-eicosatetraenoate + 2 O2 = prostaglandin G2. It carries out the reaction prostaglandin G2 + AH2 = prostaglandin H2 + A + H2O. The catalysed reaction is (9Z,12Z)-octadecadienoate + AH2 + O2 = (9R)-hydroxy-(10E,12Z)-octadecadienoate + A + H2O. It catalyses the reaction (9Z,12Z)-octadecadienoate + AH2 + O2 = (9S)-hydroxy-(10E,12Z)-octadecadienoate + A + H2O. The enzyme catalyses (9Z,12Z)-octadecadienoate + AH2 + O2 = (13S)-hydroxy-(9Z,11E)-octadecadienoate + A + H2O. It carries out the reaction (9Z,12Z)-octadecadienoate + AH2 + O2 = (13R)-hydroxy-(9Z,11E)-octadecadienoate + A + H2O. It participates in lipid metabolism; prostaglandin biosynthesis. The cyclooxygenase activity is inhibited by nonsteroidal anti-inflammatory drugs (NSAIDs) including ibuprofen, flurbiprofen, ketoprofen, naproxen, flurbiprofen, anirolac, fenclofenac and diclofenac. Functionally, dual cyclooxygenase and peroxidase that plays an important role in the biosynthesis pathway of prostanoids, a class of C20 oxylipins mainly derived from arachidonate ((5Z,8Z,11Z,14Z)-eicosatetraenoate, AA, C20:4(n-6)), with a particular role in the inflammatory response. The cyclooxygenase activity oxygenates AA to the hydroperoxy endoperoxide prostaglandin G2 (PGG2), and the peroxidase activity reduces PGG2 to the hydroxy endoperoxide prostaglandin H2 (PGH2), the precursor of all 2-series prostaglandins and thromboxanes. This complex transformation is initiated by abstraction of hydrogen at carbon 13 (with S-stereochemistry), followed by insertion of molecular O2 to form the endoperoxide bridge between carbon 9 and 11 that defines prostaglandins. The insertion of a second molecule of O2 (bis-oxygenase activity) yields a hydroperoxy group in PGG2 that is then reduced to PGH2 by two electrons. Involved in the constitutive production of prostanoids in particular in the stomach and platelets. In gastric epithelial cells, it is a key step in the generation of prostaglandins, such as prostaglandin E2 (PGE2), which plays an important role in cytoprotection. In platelets, it is involved in the generation of thromboxane A2 (TXA2), which promotes platelet activation and aggregation, vasoconstriction and proliferation of vascular smooth muscle cells. Can also use linoleate (LA, (9Z,12Z)-octadecadienoate, C18:2(n-6)) as substrate and produce hydroxyoctadecadienoates (HODEs) in a regio- and stereospecific manner, being (9R)-HODE ((9R)-hydroxy-(10E,12Z)-octadecadienoate) and (13S)-HODE ((13S)-hydroxy-(9Z,11E)-octadecadienoate) its major products. The protein is Prostaglandin G/H synthase 1 (PTGS1) of Ovis aries (Sheep).